The following is a 232-amino-acid chain: F420-dependent NADP reductase (232 aa).

Residues 15 to 18 (TGDQ), 37 to 38 (SR), Lys-42, Val-80, Val-106, and Ala-151 each bind NADP(+).

This sequence belongs to the F420-dependent NADP reductase family. Homotetramer.

It catalyses the reaction reduced coenzyme F420-(gamma-L-Glu)(n) + NADP(+) = oxidized coenzyme F420-(gamma-L-Glu)(n) + NADPH + 2 H(+). In terms of biological role, catalyzes the reduction of NADP(+) with F420H(2) via hydride transfer, and likely the reverse reaction, i.e. the reduction of F420 with NADPH. Probably functions in the regeneration of NADPH required in biosynthetic reactions. Is specific for reduced F420 as electron donor for the reduction of NADP; neither reduced FAD nor FMN can act as electron donor. The enzyme is also specific for NADP; NAD is not utilized as substrate. The sequence is that of F420-dependent NADP reductase (fno) from Methanothermobacter thermautotrophicus (strain ATCC 29096 / DSM 1053 / JCM 10044 / NBRC 100330 / Delta H) (Methanobacterium thermoautotrophicum).